The following is a 143-amino-acid chain: Peptide methionine sulfoxide reductase MsrB (143 aa).

The MsrB domain maps to 16-139 (DAELRRRLTP…NSAALNFESR (124 aa)). Residues Cys-55, Cys-58, Cys-104, and Cys-107 each contribute to the Zn(2+) site. The Nucleophile role is filled by Cys-128.

The protein belongs to the MsrB Met sulfoxide reductase family. Zn(2+) serves as cofactor.

It carries out the reaction L-methionyl-[protein] + [thioredoxin]-disulfide + H2O = L-methionyl-(R)-S-oxide-[protein] + [thioredoxin]-dithiol. The polypeptide is Peptide methionine sulfoxide reductase MsrB (Burkholderia lata (strain ATCC 17760 / DSM 23089 / LMG 22485 / NCIMB 9086 / R18194 / 383)).